Here is a 188-residue protein sequence, read N- to C-terminus: Photosystem I assembly protein Ycf4 (188 aa).

The next 2 helical transmembrane spans lie at 26-46 and 68-88; these read YFWAIAVSVGGTGFLLAGLSS and LVMGLYGIAAILLASYLWFVI.

The protein belongs to the Ycf4 family.

The protein resides in the cellular thylakoid membrane. In terms of biological role, seems to be required for the assembly of the photosystem I complex. This is Photosystem I assembly protein Ycf4 from Synechococcus sp. (strain ATCC 27144 / PCC 6301 / SAUG 1402/1) (Anacystis nidulans).